The sequence spans 736 residues: Phosphoribosylformylglycinamidine synthase subunit PurL (736 aa).

His50 is an active-site residue. ATP-binding residues include Tyr53 and Lys92. Position 94 (Glu94) interacts with Mg(2+). Substrate is bound by residues Ser95–His98 and Arg117. The active-site Proton acceptor is the His96. Mg(2+) is bound at residue Asp118. Residue Gln241 coordinates substrate. Residue Asp269 participates in Mg(2+) binding. Glu313–Gln315 is a substrate binding site. Residues Asp495 and Gly532 each coordinate ATP. Asn533 is a Mg(2+) binding site. Ser535 provides a ligand contact to substrate.

Belongs to the FGAMS family. Monomer. Part of the FGAM synthase complex composed of 1 PurL, 1 PurQ and 2 PurS subunits.

The protein resides in the cytoplasm. It carries out the reaction N(2)-formyl-N(1)-(5-phospho-beta-D-ribosyl)glycinamide + L-glutamine + ATP + H2O = 2-formamido-N(1)-(5-O-phospho-beta-D-ribosyl)acetamidine + L-glutamate + ADP + phosphate + H(+). It participates in purine metabolism; IMP biosynthesis via de novo pathway; 5-amino-1-(5-phospho-D-ribosyl)imidazole from N(2)-formyl-N(1)-(5-phospho-D-ribosyl)glycinamide: step 1/2. In terms of biological role, part of the phosphoribosylformylglycinamidine synthase complex involved in the purines biosynthetic pathway. Catalyzes the ATP-dependent conversion of formylglycinamide ribonucleotide (FGAR) and glutamine to yield formylglycinamidine ribonucleotide (FGAM) and glutamate. The FGAM synthase complex is composed of three subunits. PurQ produces an ammonia molecule by converting glutamine to glutamate. PurL transfers the ammonia molecule to FGAR to form FGAM in an ATP-dependent manner. PurS interacts with PurQ and PurL and is thought to assist in the transfer of the ammonia molecule from PurQ to PurL. The polypeptide is Phosphoribosylformylglycinamidine synthase subunit PurL (Bartonella tribocorum (strain CIP 105476 / IBS 506)).